The sequence spans 344 residues: S-adenosylmethionine:tRNA ribosyltransferase-isomerase (344 aa).

The protein belongs to the QueA family. Monomer.

It is found in the cytoplasm. The catalysed reaction is 7-aminomethyl-7-carbaguanosine(34) in tRNA + S-adenosyl-L-methionine = epoxyqueuosine(34) in tRNA + adenine + L-methionine + 2 H(+). It participates in tRNA modification; tRNA-queuosine biosynthesis. Its function is as follows. Transfers and isomerizes the ribose moiety from AdoMet to the 7-aminomethyl group of 7-deazaguanine (preQ1-tRNA) to give epoxyqueuosine (oQ-tRNA). The protein is S-adenosylmethionine:tRNA ribosyltransferase-isomerase of Levilactobacillus brevis (strain ATCC 367 / BCRC 12310 / CIP 105137 / JCM 1170 / LMG 11437 / NCIMB 947 / NCTC 947) (Lactobacillus brevis).